The primary structure comprises 241 residues: MSDSRPSGRQPDQLRPVVIQRGFTRHAEGSVLVCFGETRVLCTASVENRVPGFLRGKGEGWVTAEYGMLPRATHTRSDREAARGKQGGRTLEIQRLIGRSLRACVDRNALGERTITLDCDVLQADGGTRTAAITGAYVALVDAVNVLMKRGDIKRNPILGAVAAVSVGVYRGTPVLDLDYAEDSDCDTDMNVVMNDGGGFIELQGTAEGHAFRRDELDALLGLAEKGVGELLAAQQAALSA.

Phosphate contacts are provided by residues R89 and 127–129; that span reads GTR.

Belongs to the RNase PH family. As to quaternary structure, homohexameric ring arranged as a trimer of dimers.

It carries out the reaction tRNA(n+1) + phosphate = tRNA(n) + a ribonucleoside 5'-diphosphate. Its function is as follows. Phosphorolytic 3'-5' exoribonuclease that plays an important role in tRNA 3'-end maturation. Removes nucleotide residues following the 3'-CCA terminus of tRNAs; can also add nucleotides to the ends of RNA molecules by using nucleoside diphosphates as substrates, but this may not be physiologically important. Probably plays a role in initiation of 16S rRNA degradation (leading to ribosome degradation) during starvation. The polypeptide is Ribonuclease PH (Stenotrophomonas maltophilia (strain K279a)).